We begin with the raw amino-acid sequence, 176 residues long: MALWRAYQRALAAHPWKVQVLTAGSLMGVGDMISQQLVERRGLQQHQAGRTLTMVSLGCGFVGPVVGGWYKVLDHLIPGTTKVHALKKMLLDQGGFAPCFLGCFLPLVGILNGMSAQDNWAKLKRDYPDALITNYYLWPAVQLANFYLVPLHYRLAVVQCVAIVWNSYLSWKAHQF.

Transmembrane regions (helical) follow at residues 18 to 38 (VQVL…QQLV), 53 to 73 (TMVS…YKVL), 94 to 114 (GGFA…LNGM), and 131 to 151 (LITN…LVPL).

It belongs to the peroxisomal membrane protein PXMP2/4 family. As to expression, high levels in heart, kidney, and brain, intermediate levels in testis, and low levels in liver and spleen.

It localises to the mitochondrion inner membrane. Non-selective channel that modulates the membrane potential under normal conditions and oxidative stress, and is involved in mitochondrial homeostasis. Involved in mitochondrial deoxynucleoside triphosphates (dNTP) pool homeostasis and mitochondrial DNA (mtDNA) maintenance. May be involved in the regulation of reactive oxygen species metabolism and the control of oxidative phosphorylation. This Mus musculus (Mouse) protein is Mitochondrial inner membrane protein Mpv17.